Here is a 482-residue protein sequence, read N- to C-terminus: Probable glycine dehydrogenase (decarboxylating) subunit 2 (482 aa).

The residue at position 264 (lysine 264) is an N6-(pyridoxal phosphate)lysine.

Belongs to the GcvP family. C-terminal subunit subfamily. In terms of assembly, the glycine cleavage system is composed of four proteins: P, T, L and H. In this organism, the P 'protein' is a heterodimer of two subunits. The cofactor is pyridoxal 5'-phosphate.

It carries out the reaction N(6)-[(R)-lipoyl]-L-lysyl-[glycine-cleavage complex H protein] + glycine + H(+) = N(6)-[(R)-S(8)-aminomethyldihydrolipoyl]-L-lysyl-[glycine-cleavage complex H protein] + CO2. In terms of biological role, the glycine cleavage system catalyzes the degradation of glycine. The P protein binds the alpha-amino group of glycine through its pyridoxal phosphate cofactor; CO(2) is released and the remaining methylamine moiety is then transferred to the lipoamide cofactor of the H protein. The polypeptide is Probable glycine dehydrogenase (decarboxylating) subunit 2 (Treponema denticola (strain ATCC 35405 / DSM 14222 / CIP 103919 / JCM 8153 / KCTC 15104)).